Consider the following 414-residue polypeptide: F-box protein At3g26010 (414 aa).

The F-box domain maps to 5–52; the sequence is NRTIHLTDAIWTEILARLPLRIIARFKSVSKTWKSTIESVYFRRLFVS.

This chain is F-box protein At3g26010, found in Arabidopsis thaliana (Mouse-ear cress).